The chain runs to 175 residues: Small ribosomal subunit protein uS7 (175 aa).

It belongs to the universal ribosomal protein uS7 family. Part of the 30S ribosomal subunit. Contacts proteins S9 and S11.

One of the primary rRNA binding proteins, it binds directly to 16S rRNA where it nucleates assembly of the head domain of the 30S subunit. Is located at the subunit interface close to the decoding center, probably blocks exit of the E-site tRNA. The sequence is that of Small ribosomal subunit protein uS7 from Legionella pneumophila (strain Paris).